The primary structure comprises 360 residues: Protein pelota homolog (360 aa).

Belongs to the eukaryotic release factor 1 family. Pelota subfamily. As to quaternary structure, monomer. The cofactor is a divalent metal cation.

The protein localises to the cytoplasm. Its function is as follows. May function in recognizing stalled ribosomes, interact with stem-loop structures in stalled mRNA molecules, and effect endonucleolytic cleavage of the mRNA. May play a role in the release non-functional ribosomes and degradation of damaged mRNAs. Has endoribonuclease activity. In Hyperthermus butylicus (strain DSM 5456 / JCM 9403 / PLM1-5), this protein is Protein pelota homolog.